Consider the following 224-residue polypeptide: Heme response regulator HssR (224 aa).

The 114-residue stretch at 3–116 (KCLIVDDDYK…ELLFRIQAVL (114 aa)) folds into the Response regulatory domain. The residue at position 52 (Asp52) is a 4-aspartylphosphate. Positions 124–222 (QDIIKLGNVT…VRGQGYRVIT (99 aa)) form a DNA-binding region, ompR/PhoB-type.

In terms of processing, phosphorylated by HssS.

The protein resides in the cytoplasm. Member of the two-component regulatory system HssS/HssR involved in intracellular heme homeostasis and tempering of staphylococcal virulence. Phosphorylated HssR binds to a direct repeat sequence within hrtAB promoter and activates the expression of hrtAB, an efflux pump, in response to extracellular heme, hemin, hemoglobin or blood. The chain is Heme response regulator HssR (hssR) from Staphylococcus haemolyticus (strain JCSC1435).